The chain runs to 155 residues: Small ribosomal subunit protein uS7c (155 aa).

The protein belongs to the universal ribosomal protein uS7 family. In terms of assembly, part of the 30S ribosomal subunit.

It is found in the plastid. Its subcellular location is the chloroplast. Its function is as follows. One of the primary rRNA binding proteins, it binds directly to 16S rRNA where it nucleates assembly of the head domain of the 30S subunit. This chain is Small ribosomal subunit protein uS7c (rps7), found in Aristolochia macrophylla (Dutchman's pipe vine).